We begin with the raw amino-acid sequence, 77 residues long: U14-theraphotoxin-Cg1c (77 aa).

A signal peptide spans 1–21; that stretch reads MNTSDPPAVLRIAAITLLCTA. Residues 22-49 constitute a propeptide that is removed on maturation; the sequence is SESVEQNPLIPFENAVLGSYAKMASEKR. 2 cysteine pairs are disulfide-bonded: C50/C64 and C57/C69.

This sequence belongs to the neurotoxin 10 (Hwtx-1) family. 65 (Jztx-21) subfamily. As to expression, expressed by the venom gland.

Its subcellular location is the secreted. In terms of biological role, probable ion channel inhibitor. The sequence is that of U14-theraphotoxin-Cg1c from Chilobrachys guangxiensis (Chinese earth tiger tarantula).